The following is a 176-amino-acid chain: NAD(P)H-quinone oxidoreductase subunit 6, chloroplastic (176 aa).

A run of 5 helical transmembrane segments spans residues 10–30, 32–52, 61–81, 92–112, and 152–172; these read ILLV…VLLT, PISS…FYIP, AQLL…VMFM, LWTI…FSLI, and FYLP…GAIA.

It belongs to the complex I subunit 6 family. NDH is composed of at least 16 different subunits, 5 of which are encoded in the nucleus.

The protein localises to the plastid. It localises to the chloroplast thylakoid membrane. It carries out the reaction a plastoquinone + NADH + (n+1) H(+)(in) = a plastoquinol + NAD(+) + n H(+)(out). The catalysed reaction is a plastoquinone + NADPH + (n+1) H(+)(in) = a plastoquinol + NADP(+) + n H(+)(out). Its function is as follows. NDH shuttles electrons from NAD(P)H:plastoquinone, via FMN and iron-sulfur (Fe-S) centers, to quinones in the photosynthetic chain and possibly in a chloroplast respiratory chain. The immediate electron acceptor for the enzyme in this species is believed to be plastoquinone. Couples the redox reaction to proton translocation, and thus conserves the redox energy in a proton gradient. The protein is NAD(P)H-quinone oxidoreductase subunit 6, chloroplastic (ndhG) of Chloranthus spicatus (Chulantree).